A 350-amino-acid chain; its full sequence is Core protein VP7 (350 aa).

N-linked (GlcNAc...) asparagine; by host glycosylation is present at asparagine 45.

This sequence belongs to the orbivirus VP7 family. In terms of assembly, homotrimer.

Its subcellular location is the virion. Its function is as follows. Major structural core protein; binds to structural protein VP3. Constitutes the surface of the AHSV core. The protein is Core protein VP7 (Segment-7) of African horse sickness virus (AHSV).